Here is a 258-residue protein sequence, read N- to C-terminus: Imidazole glycerol phosphate synthase subunit HisF (258 aa).

Catalysis depends on residues Asp11 and Asp130.

The protein belongs to the HisA/HisF family. As to quaternary structure, heterodimer of HisH and HisF.

The protein localises to the cytoplasm. The enzyme catalyses 5-[(5-phospho-1-deoxy-D-ribulos-1-ylimino)methylamino]-1-(5-phospho-beta-D-ribosyl)imidazole-4-carboxamide + L-glutamine = D-erythro-1-(imidazol-4-yl)glycerol 3-phosphate + 5-amino-1-(5-phospho-beta-D-ribosyl)imidazole-4-carboxamide + L-glutamate + H(+). Its pathway is amino-acid biosynthesis; L-histidine biosynthesis; L-histidine from 5-phospho-alpha-D-ribose 1-diphosphate: step 5/9. IGPS catalyzes the conversion of PRFAR and glutamine to IGP, AICAR and glutamate. The HisF subunit catalyzes the cyclization activity that produces IGP and AICAR from PRFAR using the ammonia provided by the HisH subunit. This Nitrobacter hamburgensis (strain DSM 10229 / NCIMB 13809 / X14) protein is Imidazole glycerol phosphate synthase subunit HisF.